Reading from the N-terminus, the 82-residue chain is Putative membrane protein insertion efficiency factor (82 aa).

The segment at histidine 61–glutamate 82 is disordered.

The protein belongs to the UPF0161 family.

The protein localises to the cell inner membrane. In terms of biological role, could be involved in insertion of integral membrane proteins into the membrane. The protein is Putative membrane protein insertion efficiency factor of Fusobacterium nucleatum subsp. nucleatum (strain ATCC 25586 / DSM 15643 / BCRC 10681 / CIP 101130 / JCM 8532 / KCTC 2640 / LMG 13131 / VPI 4355).